Reading from the N-terminus, the 965-residue chain is Kinesin-like protein KIN-7K, chloroplastic (965 aa).

The tract at residues 1–69 (MASRQGSKSR…PQTAQRSKEN (69 aa)) is disordered. Positions 19-28 (STASSTTSSS) are enriched in low complexity. The span at 29 to 38 (KLYQETSIDG) shows a compositional bias: polar residues. Residues 40–56 (SSPASSSAQSKQQFFSP) are compositionally biased toward low complexity. The 320-residue stretch at 69–388 (NVTVTVRFRP…LKFAHRAKHI (320 aa)) folds into the Kinesin motor domain. ATP is bound at residue 149–156 (GVTSSGKT). Residues 389 to 483 (EIQAEQNKII…LTKLILVSTK (95 aa)) are a coiled coil. Over residues 551-561 (LLNWLKPKKRD) the composition is skewed to basic residues. Disordered stretches follow at residues 551–633 (LLNW…KMSD) and 842–888 (ATQK…ELRM). Low complexity predominate over residues 564-577 (SSASDQSSVVKSNS). A compositionally biased stretch (basic and acidic residues) spans 606 to 623 (SEPREDREALEDSSHEME). Coiled coils occupy residues 628 to 703 (SNKM…FVMT) and 738 to 846 (NRII…TQKS). Over residues 851–862 (RNKTGTTTNVRN) the composition is skewed to low complexity. Basic and acidic residues predominate over residues 864-888 (GRRESLAKRQEHDSPSMELKRELRM). Positions 896-931 (YEAALGEKEQREAELERILEETKQREAYLENELANM) form a coiled coil. Residues 942 to 965 (QGADSEISDSISETRQTEQTEGSF) are disordered. The span at 949 to 965 (SDSISETRQTEQTEGSF) shows a compositional bias: polar residues.

The protein belongs to the TRAFAC class myosin-kinesin ATPase superfamily. Kinesin family. KIN-7 subfamily.

Its subcellular location is the plastid. It localises to the chloroplast. This chain is Kinesin-like protein KIN-7K, chloroplastic, found in Arabidopsis thaliana (Mouse-ear cress).